The following is a 213-amino-acid chain: High frequency lysogenization protein HflD homolog (213 aa).

The protein belongs to the HflD family.

It localises to the cytoplasm. The protein resides in the cell inner membrane. The polypeptide is High frequency lysogenization protein HflD homolog (Alcanivorax borkumensis (strain ATCC 700651 / DSM 11573 / NCIMB 13689 / SK2)).